A 337-amino-acid chain; its full sequence is Fructose-1,6-bisphosphatase class 1 (337 aa).

Positions 94, 116, 118, and 119 each coordinate Mg(2+). Substrate is bound by residues 119-122 (DGSS), asparagine 210, and lysine 276. Position 282 (glutamate 282) interacts with Mg(2+).

This sequence belongs to the FBPase class 1 family. In terms of assembly, homotetramer. The cofactor is Mg(2+).

It localises to the cytoplasm. The enzyme catalyses beta-D-fructose 1,6-bisphosphate + H2O = beta-D-fructose 6-phosphate + phosphate. Its pathway is carbohydrate biosynthesis; gluconeogenesis. This is Fructose-1,6-bisphosphatase class 1 from Burkholderia vietnamiensis (strain G4 / LMG 22486) (Burkholderia cepacia (strain R1808)).